A 377-amino-acid chain; its full sequence is Alanine racemase (377 aa).

The active-site Proton acceptor; specific for D-alanine is Lys37. Lys37 carries the N6-(pyridoxal phosphate)lysine modification. Arg135 is a substrate binding site. Tyr271 (proton acceptor; specific for L-alanine) is an active-site residue. Met319 is a substrate binding site.

This sequence belongs to the alanine racemase family. The cofactor is pyridoxal 5'-phosphate.

It carries out the reaction L-alanine = D-alanine. Its pathway is amino-acid biosynthesis; D-alanine biosynthesis; D-alanine from L-alanine: step 1/1. Functionally, catalyzes the interconversion of L-alanine and D-alanine. May also act on other amino acids. This Helicobacter acinonychis (strain Sheeba) protein is Alanine racemase (alr).